We begin with the raw amino-acid sequence, 693 residues long: Golgin subfamily A member 6B (693 aa).

Over residues 1–11 (MWPQPYLPPHP) the composition is skewed to pro residues. Disordered regions lie at residues 1 to 72 (MWPQ…SQYQ), 497 to 551 (LPGE…VERR), 629 to 650 (NPAD…AGEQ), and 660 to 679 (NNVE…DNPT). The stretch at 77–611 (ALESSSVTIS…KLLELQELVL (535 aa)) forms a coiled coil. Over residues 537–551 (LPKEKADGTEQVERR) the composition is skewed to basic and acidic residues.

It belongs to the GOLGA6 family.

This Homo sapiens (Human) protein is Golgin subfamily A member 6B (GOLGA6B).